The primary structure comprises 430 residues: ATP-dependent RNA helicase RhlB (430 aa).

Positions 9-37 (QKFSDFALHPQVIEALESKGFHNCTPIQA) match the Q motif motif. In terms of domain architecture, Helicase ATP-binding spans 40–219 (LPLALSGRDV…FEQMNNAEYV (180 aa)). 53–60 (AQTGTGKT) is an ATP binding site. A DEAD box motif is present at residues 165–168 (DEAD). The Helicase C-terminal domain occupies 245 to 390 (RLLQTLLEEE…VSKYNSDALM (146 aa)). Positions 392-430 (DLPAPKRLTRPPRSNNGPRRHNNAPRRSGAPRNNRKRAD) are disordered.

This sequence belongs to the DEAD box helicase family. RhlB subfamily. Component of the RNA degradosome, which is a multiprotein complex involved in RNA processing and mRNA degradation.

The protein resides in the cytoplasm. The enzyme catalyses ATP + H2O = ADP + phosphate + H(+). In terms of biological role, DEAD-box RNA helicase involved in RNA degradation. Has RNA-dependent ATPase activity and unwinds double-stranded RNA. This Pectobacterium carotovorum subsp. carotovorum (strain PC1) protein is ATP-dependent RNA helicase RhlB.